A 416-amino-acid polypeptide reads, in one-letter code: Phosphoglycerate kinase (416 aa).

Val-23, Asp-24, Phe-25, Asn-26, Gln-39, Arg-40, Ser-63, His-64, Gly-66, Arg-67, Leu-122, Arg-123, His-170, and Arg-171 together coordinate (2R)-3-phosphoglycerate. Position 214 (Gly-214) interacts with ADP. Residue Gly-214 participates in CDP binding. AMP-binding residues include Ala-215 and Lys-216. An ATP-binding site is contributed by Ala-215. Residue Ala-215 participates in Mg(2+) binding. Asp-219 contributes to the CDP binding site. A Mg(2+)-binding site is contributed by Asp-219. Lys-220 is a binding site for AMP. Lys-220 contributes to the ATP binding site. Gly-238 is an ADP binding site. CDP is bound at residue Gly-238. Residues Gly-239 and Gly-312 each contribute to the AMP site. Residues Gly-239 and Gly-312 each coordinate ATP. Residues Gly-337, Ala-339, and Phe-342 each contribute to the CDP site. Residue Phe-342 coordinates ADP. Glu-343 provides a ligand contact to AMP. Residues Glu-343, Asp-374, and Thr-375 each coordinate ATP. A Mg(2+)-binding site is contributed by Asp-374.

It belongs to the phosphoglycerate kinase family. Monomer. The cofactor is Mg(2+).

It is found in the cytoplasm. The protein localises to the mitochondrion. The catalysed reaction is (2R)-3-phosphoglycerate + ATP = (2R)-3-phospho-glyceroyl phosphate + ADP. It participates in carbohydrate degradation; glycolysis; pyruvate from D-glyceraldehyde 3-phosphate: step 2/5. Its function is as follows. Catalyzes one of the two ATP producing reactions in the glycolytic pathway via the reversible conversion of 1,3-diphosphoglycerate to 3-phosphoglycerate. Both L- and D- forms of purine and pyrimidine nucleotides can be used as substrates, but the activity is much lower on pyrimidines. Negatively regulates the biosynthesis of acetyl-CoA from pyruvate in the mitochondrion. The chain is Phosphoglycerate kinase (pgk1) from Hypocrea jecorina (Trichoderma reesei).